The sequence spans 425 residues: Nicotinate dehydrogenase large molybdopterin subunit (425 aa).

Se-Mo-molybdopterin cytosine dinucleotide-binding positions include Gln208 and 238–240; that span reads GFG.

The protein belongs to the xanthine dehydrogenase family. Heterooctamer of NDHM, NDHL, NDHS and NDHF. Dimer of heterotetramers. Se-Mo-molybdopterin cytosine dinucleotide serves as cofactor.

The catalysed reaction is nicotinate + NADP(+) + H2O = 6-hydroxynicotinate + NADPH + H(+). Its pathway is cofactor degradation; nicotinate degradation; 6-hydroxynicotinate from nicotinate: step 1/1. Its activity is regulated as follows. Reversibly inactivated by selenide and sulfide. Not inhibited by cyanide. Functionally, catalyzes the hydroxylation of nicotinate to 6-hydroxynicotinate. Also active against 2-pyrazinecarboxylic acid, but inactive against other nicotinate analogs. The sequence is that of Nicotinate dehydrogenase large molybdopterin subunit (ndhL) from Eubacterium barkeri (Clostridium barkeri).